Here is a 90-residue protein sequence, read N- to C-terminus: DNA-directed RNA polymerase subunit omega (90 aa).

Belongs to the RNA polymerase subunit omega family. As to quaternary structure, the RNAP catalytic core consists of 2 alpha, 1 beta, 1 beta' and 1 omega subunit. When a sigma factor is associated with the core the holoenzyme is formed, which can initiate transcription.

It catalyses the reaction RNA(n) + a ribonucleoside 5'-triphosphate = RNA(n+1) + diphosphate. Its function is as follows. Promotes RNA polymerase assembly. Latches the N- and C-terminal regions of the beta' subunit thereby facilitating its interaction with the beta and alpha subunits. In Streptomyces coelicolor (strain ATCC BAA-471 / A3(2) / M145), this protein is DNA-directed RNA polymerase subunit omega (rpoZ).